The following is a 74-amino-acid chain: RNA-binding protein Hfq (74 aa).

Positions 9 to 69 (DQYLNQLRKN…ISTFSPVKNV (61 aa)) constitute a Sm domain.

The protein belongs to the Hfq family. Homohexamer.

RNA chaperone that binds small regulatory RNA (sRNAs) and mRNAs to facilitate mRNA translational regulation in response to envelope stress, environmental stress and changes in metabolite concentrations. Also binds with high specificity to tRNAs. This chain is RNA-binding protein Hfq, found in Oceanobacillus iheyensis (strain DSM 14371 / CIP 107618 / JCM 11309 / KCTC 3954 / HTE831).